Consider the following 164-residue polypeptide: HTH-type transcriptional regulator IscR (164 aa).

Residues 2 to 131 (RLTSKGRYAV…NNITLDELVN (130 aa)) enclose the HTH rrf2-type domain. Positions 28–51 (LADISERQGISLSYLEQLFSRLRK) form a DNA-binding region, H-T-H motif. [2Fe-2S] cluster-binding residues include C92, C98, and C104.

It depends on [2Fe-2S] cluster as a cofactor.

Regulates the transcription of several operons and genes involved in the biogenesis of Fe-S clusters and Fe-S-containing proteins. This is HTH-type transcriptional regulator IscR from Pectobacterium atrosepticum (strain SCRI 1043 / ATCC BAA-672) (Erwinia carotovora subsp. atroseptica).